The sequence spans 30 residues: Dermonecrotic toxin LlSicTox-alphaIII-1 (30 aa).

His12 is a catalytic residue.

Belongs to the arthropod phospholipase D family. Class I subfamily. The cofactor is Mg(2+). Contains 1 disulfide bond. As to expression, expressed by the venom gland.

Its subcellular location is the secreted. The catalysed reaction is an N-(acyl)-sphingosylphosphocholine = an N-(acyl)-sphingosyl-1,3-cyclic phosphate + choline. It catalyses the reaction an N-(acyl)-sphingosylphosphoethanolamine = an N-(acyl)-sphingosyl-1,3-cyclic phosphate + ethanolamine. The enzyme catalyses a 1-acyl-sn-glycero-3-phosphocholine = a 1-acyl-sn-glycero-2,3-cyclic phosphate + choline. It carries out the reaction a 1-acyl-sn-glycero-3-phosphoethanolamine = a 1-acyl-sn-glycero-2,3-cyclic phosphate + ethanolamine. Functionally, dermonecrotic toxins cleave the phosphodiester linkage between the phosphate and headgroup of certain phospholipids (sphingolipid and lysolipid substrates), forming an alcohol (often choline) and a cyclic phosphate. This toxin acts on sphingomyelin (SM). It may also act on ceramide phosphoethanolamine (CPE), lysophosphatidylcholine (LPC) and lysophosphatidylethanolamine (LPE), but not on lysophosphatidylserine (LPS), and lysophosphatidylglycerol (LPG). It acts by transphosphatidylation, releasing exclusively cyclic phosphate products as second products. In vivo, intradermal injection induces dermonecrosis. Induces hemolysis, increased vascular permeability, edema, inflammatory response, and platelet aggregation. The protein is Dermonecrotic toxin LlSicTox-alphaIII-1 of Loxosceles laeta (South American recluse spider).